Reading from the N-terminus, the 389-residue chain is Geodin cluster transcriptional coactivator gedD (389 aa).

In terms of domain architecture, HTH iclR-type spans 13-83 (LAWHVQLLAC…QPGQIMHTPL (71 aa)). Positions 43 to 62 (VRDLAQLCGVSETTLSRVVR) form a DNA-binding region, H-T-H motif.

It is found in the nucleus. Functionally, transcriptional coactivator; part of the gene cluster that mediates the biosynthesis of geodin, an intermediate in the biosynthesis of other natural products. With gedR, coregulates the production of geodin. This chain is Geodin cluster transcriptional coactivator gedD (gedD), found in Aspergillus terreus (strain NIH 2624 / FGSC A1156).